The chain runs to 72 residues: uncharacterized protein (72 aa).

The helical transmembrane segment at 33–53 (VCIFFSLIFFFFFFFFCVNWG) threads the bilayer.

Its subcellular location is the membrane. This is an uncharacterized protein from Dictyostelium discoideum (Social amoeba).